The primary structure comprises 96 residues: uncharacterized protein (96 aa).

3 residues coordinate [3Fe-4S] cluster: Cys10, Cys16, and Cys55. The disordered stretch occupies residues 67-96; it reads AGDGERASADPAPSPAEAERHAAKDQHNLG. The span at 83–96 shows a compositional bias: basic and acidic residues; sequence EAERHAAKDQHNLG.

It depends on [3Fe-4S] cluster as a cofactor.

In terms of biological role, electron transport protein for the cytochrome systems. This is an uncharacterized protein from Bradyrhizobium diazoefficiens (strain JCM 10833 / BCRC 13528 / IAM 13628 / NBRC 14792 / USDA 110).